We begin with the raw amino-acid sequence, 693 residues long: tRNA (guanine(37)-N(1))-methyltransferase (693 aa).

Residues R327, 365 to 366 (DI), and 392 to 393 (DA) contribute to the S-adenosyl-L-methionine site. Residues 497-572 (AGDSHQSNSH…QKAEDAPTNE (76 aa)) are disordered. Residues 500–512 (SHQSNSHQSNPHE) are compositionally biased toward low complexity. Residue N591 coordinates S-adenosyl-L-methionine.

Belongs to the class I-like SAM-binding methyltransferase superfamily. TRM5/TYW2 family. Monomer.

It localises to the mitochondrion matrix. It is found in the nucleus. The protein localises to the cytoplasm. It catalyses the reaction guanosine(37) in tRNA + S-adenosyl-L-methionine = N(1)-methylguanosine(37) in tRNA + S-adenosyl-L-homocysteine + H(+). Its function is as follows. Specifically methylates the N1 position of guanosine-37 in various cytoplasmic and mitochondrial tRNAs. Methylation is not dependent on the nature of the nucleoside 5' of the target nucleoside. This is the first step in the biosynthesis of wybutosine (yW), a modified base adjacent to the anticodon of tRNAs and required for accurate decoding. This is tRNA (guanine(37)-N(1))-methyltransferase from Plasmodium vivax (strain Salvador I).